Consider the following 393-residue polypeptide: Phosphoglycerate kinase (393 aa).

Residues 21-23 (DFN), Arg-37, 60-63 (HLGR), Arg-119, and Arg-152 contribute to the substrate site. ATP is bound by residues Lys-202, Gly-291, Glu-322, and 348–351 (GGDT).

Belongs to the phosphoglycerate kinase family. Monomer.

The protein resides in the cytoplasm. The catalysed reaction is (2R)-3-phosphoglycerate + ATP = (2R)-3-phospho-glyceroyl phosphate + ADP. It functions in the pathway carbohydrate degradation; glycolysis; pyruvate from D-glyceraldehyde 3-phosphate: step 2/5. This chain is Phosphoglycerate kinase, found in Coprothermobacter proteolyticus (strain ATCC 35245 / DSM 5265 / OCM 4 / BT).